The chain runs to 215 residues: Large ribosomal subunit protein uL4c (215 aa).

Over residues 48–57 (SQRQGTISTK) the composition is skewed to polar residues. The interval 48–85 (SQRQGTISTKTRSEVRGGGRKPWRQKGTGRARAGSSRS) is disordered. Positions 65–76 (GGRKPWRQKGTG) are enriched in basic residues.

This sequence belongs to the universal ribosomal protein uL4 family. In terms of assembly, part of the 50S ribosomal subunit.

It localises to the plastid. The protein localises to the chloroplast. Probably binds the 23S rRNA. In Trieres chinensis (Marine centric diatom), this protein is Large ribosomal subunit protein uL4c (rpl4).